We begin with the raw amino-acid sequence, 866 residues long: Probable outer membrane usher protein ElfC (866 aa).

Residues 1 to 35 (MYRTHRQHSLLSSGGVPSFIGGLVVFVSAAFNAQA) form the signal peptide.

It belongs to the fimbrial export usher family.

The protein localises to the cell outer membrane. Part of the elfADCG fimbrial operon, which could be required for adherence to host epithelial cells. Could be involved in the export and assembly of the ElfA fimbrial subunits across the outer membrane. The chain is Probable outer membrane usher protein ElfC (elfC) from Escherichia coli O157:H7.